A 400-amino-acid chain; its full sequence is Serine/threonine-protein kinase AFC3 (400 aa).

Positions 1 to 29 (MIANGFESMDKERVRKRPRMTWDEAPAEP) are disordered. Positions 71–396 (YKILSKMGEG…ANEALDHPFF (326 aa)) constitute a Protein kinase domain. ATP is bound by residues 77–85 (MGEGTFGRV) and Lys100. Residue Asp196 is the Proton acceptor of the active site.

This sequence belongs to the protein kinase superfamily. CMGC Ser/Thr protein kinase family. Lammer subfamily.

The catalysed reaction is L-seryl-[protein] + ATP = O-phospho-L-seryl-[protein] + ADP + H(+). It carries out the reaction L-threonyl-[protein] + ATP = O-phospho-L-threonyl-[protein] + ADP + H(+). It catalyses the reaction L-tyrosyl-[protein] + ATP = O-phospho-L-tyrosyl-[protein] + ADP + H(+). The chain is Serine/threonine-protein kinase AFC3 (AFC3) from Arabidopsis thaliana (Mouse-ear cress).